We begin with the raw amino-acid sequence, 188 residues long: Probable manganese efflux pump MntP (188 aa).

A run of 5 helical transmembrane segments spans residues 3–23 (ITAT…ASIG), 66–86 (LEWN…RMII), 106–128 (WLLV…GLAF), 143–163 (ATLI…SIIG), and 168–188 (ILGG…HFHG).

It belongs to the MntP (TC 9.B.29) family.

It is found in the cell inner membrane. Probably functions as a manganese efflux pump. This is Probable manganese efflux pump MntP from Escherichia coli O139:H28 (strain E24377A / ETEC).